A 78-amino-acid chain; its full sequence is Large ribosomal subunit protein eL20 (78 aa).

Belongs to the eukaryotic ribosomal protein eL20 family. As to quaternary structure, part of the 50S ribosomal subunit. Binds 23S rRNA.

The polypeptide is Large ribosomal subunit protein eL20 (Methanothermobacter thermautotrophicus (strain ATCC 29096 / DSM 1053 / JCM 10044 / NBRC 100330 / Delta H) (Methanobacterium thermoautotrophicum)).